The following is a 977-amino-acid chain: uncharacterized protein (977 aa).

The N-terminal stretch at 1–24 (MQSNLLKVLGVLAIVATLVCFIFA) is a signal peptide. A disordered region spans residues 125 to 146 (TESTRPGKSNLDDKGNMIPIPR). The next 6 membrane-spanning stretches (helical) occupy residues 612–632 (IKAILILYVMTYGAMFLLGFA), 722–742 (LGLSGIIYFIITFIAVGIVII), 754–774 (AFMATCILIGIAPLFISFLLF), 796–816 (VVMMAGIIVLTQLFTIYLDFV), 833–853 (FIGTILPIALLNVPIFCINWF), and 866–886 (GVNMQNIVALVIIAYGMYGYV). The tract at residues 918 to 977 (KALSPIGMDDKTRQGITGRAEARLKQRNKTLDQAEKNRKNTPKEGGEKTNAEPPQPEARG) is disordered. A compositionally biased stretch (basic and acidic residues) spans 937-967 (AEARLKQRNKTLDQAEKNRKNTPKEGGEKTN).

It belongs to the TrbL/VirB6 family.

It localises to the cell membrane. This is an uncharacterized protein from Rickettsia felis (strain ATCC VR-1525 / URRWXCal2) (Rickettsia azadi).